The primary structure comprises 590 residues: Acetolactate synthase large subunit (590 aa).

Glutamate 61 is a binding site for thiamine diphosphate. Residues arginine 163, 271–292 (HGTA…LGAR), and 314–333 (DIDP…IVGD) each bind FAD. The thiamine pyrophosphate binding stretch occupies residues 405-484 (QHQMWSAQFL…VKIIIINNRW (80 aa)). Aspartate 455 and asparagine 482 together coordinate Mg(2+).

The protein belongs to the TPP enzyme family. In terms of assembly, dimer of large and small chains. It depends on Mg(2+) as a cofactor. Thiamine diphosphate is required as a cofactor.

Its subcellular location is the plastid. It is found in the chloroplast. It carries out the reaction 2 pyruvate + H(+) = (2S)-2-acetolactate + CO2. It participates in amino-acid biosynthesis; L-isoleucine biosynthesis; L-isoleucine from 2-oxobutanoate: step 1/4. Its pathway is amino-acid biosynthesis; L-valine biosynthesis; L-valine from pyruvate: step 1/4. The sequence is that of Acetolactate synthase large subunit (ilvB) from Pyropia yezoensis (Susabi-nori).